The chain runs to 225 residues: Small ribosomal subunit protein uS7 (225 aa).

An N-acetylserine modification is found at serine 2. Position 27 is a phosphothreonine (threonine 27). Glycyl lysine isopeptide (Lys-Gly) (interchain with G-Cter in ubiquitin) cross-links involve residues lysine 45 and lysine 203.

The protein belongs to the universal ribosomal protein uS7 family. As to quaternary structure, component of the small ribosomal subunit (SSU). Mature yeast ribosomes consist of a small (40S) and a large (60S) subunit. The 40S small subunit contains 1 molecule of ribosomal RNA (18S rRNA) and 33 different proteins (encoded by 57 genes). The large 60S subunit contains 3 rRNA molecules (25S, 5.8S and 5S rRNA) and 46 different proteins (encoded by 81 genes). N-terminally acetylated by acetyltransferase NatA.

Its subcellular location is the cytoplasm. Component of the ribosome, a large ribonucleoprotein complex responsible for the synthesis of proteins in the cell. The small ribosomal subunit (SSU) binds messenger RNAs (mRNAs) and translates the encoded message by selecting cognate aminoacyl-transfer RNA (tRNA) molecules. The large subunit (LSU) contains the ribosomal catalytic site termed the peptidyl transferase center (PTC), which catalyzes the formation of peptide bonds, thereby polymerizing the amino acids delivered by tRNAs into a polypeptide chain. The nascent polypeptides leave the ribosome through a tunnel in the LSU and interact with protein factors that function in enzymatic processing, targeting, and the membrane insertion of nascent chains at the exit of the ribosomal tunnel. This chain is Small ribosomal subunit protein uS7, found in Saccharomyces cerevisiae (strain ATCC 204508 / S288c) (Baker's yeast).